Reading from the N-terminus, the 103-residue chain is Transcriptional regulator WhiB7 (103 aa).

[4Fe-4S] cluster-binding residues include Cys17, Cys49, Cys52, and Cys58. A 4Fe-4S Wbl-type domain is found at 25-82; that stretch reads PCHVGDPDLWFAENPGDLERAKALCAGCPIRVQCLTAALERQEPWGVWGGEILDRGSI. Residues 82-103 are disordered; sequence IVARKRPRGRPRKDSGGNPAAA.

This sequence belongs to the WhiB family. [4Fe-4S] cluster is required as a cofactor. Post-translationally, the Fe-S cluster can be nitrosylated by nitric oxide (NO). In terms of processing, upon Fe-S cluster removal intramolecular disulfide bonds are formed.

It is found in the cytoplasm. In terms of biological role, acts as a transcriptional regulator. Probably redox-responsive. The apo- but not holo-form probably binds DNA. Participates in maintaining a reduced cytoplasmic (MSH/MSSM) environment under normal growth conditions and directly or indirectly controls the concentration of mycothiol (MSH + MSSM). In Mycolicibacterium smegmatis (strain ATCC 700084 / mc(2)155) (Mycobacterium smegmatis), this protein is Transcriptional regulator WhiB7 (whiB7).